The chain runs to 219 residues: Ribose-5-phosphate isomerase A (219 aa).

Residues 28–31 (SGST), 81–84 (DGAD), and 94–97 (KGGG) each bind substrate. The active-site Proton acceptor is glutamate 103. Lysine 121 lines the substrate pocket.

Belongs to the ribose 5-phosphate isomerase family. In terms of assembly, homodimer.

The catalysed reaction is aldehydo-D-ribose 5-phosphate = D-ribulose 5-phosphate. It participates in carbohydrate degradation; pentose phosphate pathway; D-ribose 5-phosphate from D-ribulose 5-phosphate (non-oxidative stage): step 1/1. In terms of biological role, catalyzes the reversible conversion of ribose-5-phosphate to ribulose 5-phosphate. In Haemophilus influenzae (strain 86-028NP), this protein is Ribose-5-phosphate isomerase A.